We begin with the raw amino-acid sequence, 374 residues long: Putative glutamate--cysteine ligase 2 (374 aa).

Belongs to the glutamate--cysteine ligase type 2 family. YbdK subfamily.

It carries out the reaction L-cysteine + L-glutamate + ATP = gamma-L-glutamyl-L-cysteine + ADP + phosphate + H(+). ATP-dependent carboxylate-amine ligase which exhibits weak glutamate--cysteine ligase activity. In Verminephrobacter eiseniae (strain EF01-2), this protein is Putative glutamate--cysteine ligase 2.